We begin with the raw amino-acid sequence, 331 residues long: Retinol dehydrogenase 13 (331 aa).

Residue S2 is modified to N-acetylserine. Residue 45 to 51 coordinates NADP(+); it reads GANTGIG. Substrate is bound at residue S174. Catalysis depends on Y200, which acts as the Proton acceptor. S323 is subject to Phosphoserine.

Belongs to the short-chain dehydrogenases/reductases (SDR) family. Widely expressed. In the retina, detected in the inner segment of the photoreceptor cells. Weak signals are observed in a small population of inner nuclear neurons and the inner plexiform layer.

It localises to the mitochondrion inner membrane. The enzyme catalyses all-trans-retinol + NADP(+) = all-trans-retinal + NADPH + H(+). The protein operates within cofactor metabolism; retinol metabolism. In terms of biological role, retinol dehydrogenase with a clear preference for NADP. Oxidizes all-trans-retinol, but seems to reduce all-trans-retinal with much higher efficiency. Has no activity toward steroids. In Homo sapiens (Human), this protein is Retinol dehydrogenase 13 (RDH13).